A 140-amino-acid chain; its full sequence is Probable lipoprotein LppE (140 aa).

The N-terminal stretch at 1–21 (MCNRLVTVTGVAMVVAAGLSA) is a signal peptide. Cys22 is lipidated: N-palmitoyl cysteine. A lipid anchor (S-diacylglycerol cysteine) is attached at Cys22.

This sequence belongs to the mycobacterial 19 kDa antigen family.

It localises to the cell membrane. The chain is Probable lipoprotein LppE (lppE) from Mycobacterium tuberculosis (strain ATCC 25618 / H37Rv).